We begin with the raw amino-acid sequence, 1188 residues long: DNA-directed RNA polymerase subunit beta (1188 aa).

The protein belongs to the RNA polymerase beta chain family. In terms of assembly, the RNAP catalytic core consists of 2 alpha, 1 beta, 1 beta' and 1 omega subunit. When a sigma factor is associated with the core the holoenzyme is formed, which can initiate transcription.

It carries out the reaction RNA(n) + a ribonucleoside 5'-triphosphate = RNA(n+1) + diphosphate. Its function is as follows. DNA-dependent RNA polymerase catalyzes the transcription of DNA into RNA using the four ribonucleoside triphosphates as substrates. This Streptococcus equi subsp. zooepidemicus (strain H70) protein is DNA-directed RNA polymerase subunit beta.